The primary structure comprises 332 residues: Ethylene-responsive transcription factor ERF119 (332 aa).

Residues 1–33 form a disordered region; the sequence is MAERKKRSSIQTNKPNKKPMKKKPFQLNHLPGL. The segment covering 15-24 has biased composition (basic residues); that stretch reads PNKKPMKKKP. The segment at residues 130–187 is a DNA-binding region (AP2/ERF); the sequence is KPVGVRQRKWGKWAAEIRHPITKVRTWLGTYETLEQAADAYATKKLEFDALAAATSAA.

The protein belongs to the AP2/ERF transcription factor family. ERF subfamily.

The protein localises to the nucleus. In terms of biological role, probably acts as a transcriptional activator. Binds to the GCC-box pathogenesis-related promoter element. May be involved in the regulation of gene expression by stress factors and by components of stress signal transduction pathways. In Arabidopsis thaliana (Mouse-ear cress), this protein is Ethylene-responsive transcription factor ERF119 (ERF119).